Reading from the N-terminus, the 183-residue chain is Outer membrane protein H.8 (183 aa).

The first 17 residues, 1 to 17 (MKAYLALISAAVIGLAA), serve as a signal peptide directing secretion. Cys-18 carries the N-palmitoyl cysteine lipid modification. Cys-18 carries S-diacylglycerol cysteine lipidation. Residues 27–51 (AEATPAGEAPASEAPAAEAAPADAA) form a disordered region. In terms of domain architecture, Plastocyanin-like spans 57 to 183 (GNCAATVESN…LMNGKVTLVD (127 aa)). The Cu cation site is built by His-102, Cys-166, His-171, and Met-175.

Requires Cu cation as cofactor.

The protein localises to the cell outer membrane. The protein is Outer membrane protein H.8 of Neisseria gonorrhoeae.